Reading from the N-terminus, the 379-residue chain is MSCPYAGNGNDHDDSAVPLTTEVGKIYGEYLMLDKLLDAQCMLSEEDKRPVHDEHLFIITHQAYELWFKQIIFEFDSIRDMLDAEVIDETKTLEIVKRLNRVVLILKLLVDQVPILETMTPLDFMDFRKYLAPASGFQSLQFRLIENKLGVLTEQRVRYNQKYSDVFSDEEARNSIRNSEKDPSLLELVQRWLERTPGLEESGFNFWAKFQESVDRFLEAQVQSAMEEPVEKAKNYRLMDIEKRREVYRSIFDPAVHDALVRRGDRRFSHRALQGAIMITFYRDEPRFSQPHQLLTLLMDIDSLITKWRYNHVIMVQRMIGSQQLGTGGSSGYQYLRSTLSDRYKVFLDLFNLSTFLIPREAIPPLDETIRKKLINKSV.

Substrate is bound by residues 57–61 (FIITH) and Arg-128. His-312 contributes to the heme binding site. Thr-327 provides a ligand contact to substrate.

This sequence belongs to the tryptophan 2,3-dioxygenase family. As to quaternary structure, homotetramer. Dimer of dimers. Heme serves as cofactor.

It catalyses the reaction L-tryptophan + O2 = N-formyl-L-kynurenine. Its pathway is amino-acid degradation; L-tryptophan degradation via kynurenine pathway; L-kynurenine from L-tryptophan: step 1/2. It functions in the pathway pigment biosynthesis; ommochrome biosynthesis. Its function is as follows. Heme-dependent dioxygenase that catalyzes the oxidative cleavage of the L-tryptophan (L-Trp) pyrrole ring and converts L-tryptophan to N-formyl-L-kynurenine. Catalyzes the oxidative cleavage of the indole moiety. Required during larval growth to control the level of potentially harmful free tryptophan in the hemolymph. In the adult the same reaction is the first step in the ommochrome biosynthetic pathway. The chain is Tryptophan 2,3-dioxygenase from Drosophila melanogaster (Fruit fly).